The chain runs to 272 residues: Ethanolamine ammonia-lyase small subunit (272 aa).

Residues V161, E182, and C211 each contribute to the adenosylcob(III)alamin site.

This sequence belongs to the EutC family. In terms of assembly, the basic unit is a heterodimer which dimerizes to form tetramers. The heterotetramers trimerize; 6 large subunits form a core ring with 6 small subunits projecting outwards. It depends on adenosylcob(III)alamin as a cofactor.

Its subcellular location is the bacterial microcompartment. It catalyses the reaction ethanolamine = acetaldehyde + NH4(+). It functions in the pathway amine and polyamine degradation; ethanolamine degradation. Functionally, catalyzes the deamination of various vicinal amino-alcohols to oxo compounds. Allows this organism to utilize ethanolamine as the sole source of nitrogen and carbon in the presence of external vitamin B12. The sequence is that of Ethanolamine ammonia-lyase small subunit from Xanthomonas campestris pv. campestris (strain B100).